Reading from the N-terminus, the 226-residue chain is ATP synthase F(0) complex subunit a (226 aa).

The next 6 helical transmembrane spans lie at 11–31 (APSM…SILF), 68–88 (WALM…LGLL), 97–117 (QLSM…ITGF), 138–158 (IPML…ALAV), 164–184 (ITAG…LINI), and 189–209 (AFIT…VALI).

It belongs to the ATPase A chain family. In terms of assembly, component of the ATP synthase complex composed at least of ATP5F1A/subunit alpha, ATP5F1B/subunit beta, ATP5MC1/subunit c (homooctomer), MT-ATP6/subunit a, MT-ATP8/subunit 8, ATP5ME/subunit e, ATP5MF/subunit f, ATP5MG/subunit g, ATP5MK/subunit k, ATP5MJ/subunit j, ATP5F1C/subunit gamma, ATP5F1D/subunit delta, ATP5F1E/subunit epsilon, ATP5PF/subunit F6, ATP5PB/subunit b, ATP5PD/subunit d, ATP5PO/subunit OSCP. ATP synthase complex consists of a soluble F(1) head domain (subunits alpha(3) and beta(3)) - the catalytic core - and a membrane F(0) domain - the membrane proton channel (subunits c, a, 8, e, f, g, k and j). These two domains are linked by a central stalk (subunits gamma, delta, and epsilon) rotating inside the F1 region and a stationary peripheral stalk (subunits F6, b, d, and OSCP). Interacts with DNAJC30; interaction is direct.

Its subcellular location is the mitochondrion inner membrane. It catalyses the reaction H(+)(in) = H(+)(out). Functionally, subunit a, of the mitochondrial membrane ATP synthase complex (F(1)F(0) ATP synthase or Complex V) that produces ATP from ADP in the presence of a proton gradient across the membrane which is generated by electron transport complexes of the respiratory chain. ATP synthase complex consist of a soluble F(1) head domain - the catalytic core - and a membrane F(1) domain - the membrane proton channel. These two domains are linked by a central stalk rotating inside the F(1) region and a stationary peripheral stalk. During catalysis, ATP synthesis in the catalytic domain of F(1) is coupled via a rotary mechanism of the central stalk subunits to proton translocation. With the subunit c (ATP5MC1), forms the proton-conducting channel in the F(0) domain, that contains two crucial half-channels (inlet and outlet) that facilitate proton movement from the mitochondrial intermembrane space (IMS) into the matrix. Protons are taken up via the inlet half-channel and released through the outlet half-channel, following a Grotthuss mechanism. The protein is ATP synthase F(0) complex subunit a of Canis lupus familiaris (Dog).